We begin with the raw amino-acid sequence, 72 residues long: Delta-actitoxin-Avd2b 1 (72 aa).

The signal sequence occupies residues 1 to 21 (MMNRLLVFLMLGAAFMLVVSA). The propeptide occupies 22–42 (NDAYGDEPAFKDLNQGDESLG). Cystine bridges form between Cys47-Cys62, Cys48-Cys56, and Cys50-Cys67.

The protein belongs to the sea anemone short toxin (type III) family.

It localises to the secreted. The protein resides in the nematocyst. In terms of biological role, voltage-gated sodium channel (Nav) inhibitor. 1 uM completely inhibits insect voltage-gated sodium channel inactivation (DmNav1 from D.melanogaster). The chain is Delta-actitoxin-Avd2b 1 from Anemonia viridis (Snakelocks anemone).